Consider the following 441-residue polypeptide: MSIDIDWERATSGPDGELLAERIRSFIHDKFQQMVLPRFIRSVQVTSFNFGTIPPELEIRDLTDPFPDFYEDGDEDLSVSSEEQSPMREQADRYRERIDSWQTNSPGGLEVQMSGRMGFGHPLQLAPDEDGSRLHPLRSPINLGDINPYLFPRSGTPGIPGGTSNLGYFMPLSGLSGSQTPLRAVTRGNPFSGGWPDSPLENESRMGHGQGPPRRRSEVNVDAIQSRPSTVNTGNTLFSRGSVSTGDPRHSHSSQTVLANNPGQAPEANDSPVSAVPPLSGTPPRRMREQKAEDFQVFCRTKYAGNISLSLTAEILLDYPMPSFVGLPLKLNITGLTFDAVAVLAYIRRRIHFCFLSPEDAYALIGPETGGGGGDTMEPNSLRRKNLSLLRKIRVESEIGRKENGKQALKNVGKVEKFVLEQVRRIFEEEFVYPSFWTFLV.

In terms of domain architecture, SMP-LTD spans 1–441 (MSIDIDWERA…VYPSFWTFLV (441 aa)). Disordered stretches follow at residues 70 to 89 (YEDG…PMRE) and 180 to 289 (TPLR…RMRE). Polar residues-rich tracts occupy residues 226-245 (SRPS…SVST) and 253-263 (SSQTVLANNPG).

Belongs to the MDM12 family. In terms of assembly, component of the ER-mitochondria encounter structure (ERMES) or MDM complex, composed of MMM1, MDM10, MDM12 and MDM34. An MMM1 homodimer associates with one molecule of MDM12 on each side in a pairwise head-to-tail manner, and the SMP-LTD domains of MMM1 and MDM12 generate a continuous hydrophobic tunnel for phospholipid trafficking.

The protein resides in the mitochondrion outer membrane. The protein localises to the endoplasmic reticulum membrane. Functionally, component of the ERMES/MDM complex, which serves as a molecular tether to connect the endoplasmic reticulum (ER) and mitochondria. Components of this complex are involved in the control of mitochondrial shape and protein biogenesis, and function in nonvesicular lipid trafficking between the ER and mitochondria. MDM12 is required for the interaction of the ER-resident membrane protein MMM1 and the outer mitochondrial membrane-resident beta-barrel protein MDM10. The MDM12-MMM1 subcomplex functions in the major beta-barrel assembly pathway that is responsible for biogenesis of all mitochondrial outer membrane beta-barrel proteins, and acts in a late step after the SAM complex. The MDM10-MDM12-MMM1 subcomplex further acts in the TOM40-specific pathway after the action of the MDM12-MMM1 complex. Essential for establishing and maintaining the structure of mitochondria and maintenance of mtDNA nucleoids. The sequence is that of Mitochondrial distribution and morphology protein 12 from Paracoccidioides brasiliensis (strain Pb03).